The primary structure comprises 590 residues: Cyclin-dependent kinase-like 3 (590 aa).

The region spanning 4–286 (YETLGKVGEG…SSDLLHHEYF (283 aa)) is the Protein kinase domain. ATP contacts are provided by residues 10–18 (VGEGSYGTV) and Lys33. The [NKR]KIAxRE motif lies at 45–51 (KIAMREI). Asp125 (proton acceptor) is an active-site residue. At Thr158 the chain carries Phosphothreonine. A Phosphotyrosine modification is found at Tyr160. Disordered regions lie at residues 459-508 (RAKK…SNEN) and 547-590 (LKRE…PDVE). The span at 466–477 (SSQSIGQVMPNS) shows a compositional bias: polar residues. Composition is skewed to basic and acidic residues over residues 547–556 (LKRESKKTDS) and 580–590 (TERKKNLPDVE).

This sequence belongs to the protein kinase superfamily. CMGC Ser/Thr protein kinase family. CDC2/CDKX subfamily.

The protein resides in the cytoplasm. The enzyme catalyses L-seryl-[protein] + ATP = O-phospho-L-seryl-[protein] + ADP + H(+). The catalysed reaction is L-threonyl-[protein] + ATP = O-phospho-L-threonyl-[protein] + ADP + H(+). This is Cyclin-dependent kinase-like 3 from Macaca fascicularis (Crab-eating macaque).